The following is a 1036-amino-acid chain: Isoleucine--tRNA ligase (1036 aa).

The 'HIGH' region signature appears at 46 to 56; sequence PFATGLPHYGH. The short motif at 589 to 593 is the 'KMSKS' region element; that stretch reads KMSKR. Lysine 592 contacts ATP.

This sequence belongs to the class-I aminoacyl-tRNA synthetase family. IleS type 2 subfamily. In terms of assembly, monomer. Zn(2+) serves as cofactor.

It localises to the cytoplasm. The catalysed reaction is tRNA(Ile) + L-isoleucine + ATP = L-isoleucyl-tRNA(Ile) + AMP + diphosphate. Catalyzes the attachment of isoleucine to tRNA(Ile). As IleRS can inadvertently accommodate and process structurally similar amino acids such as valine, to avoid such errors it has two additional distinct tRNA(Ile)-dependent editing activities. One activity is designated as 'pretransfer' editing and involves the hydrolysis of activated Val-AMP. The other activity is designated 'posttransfer' editing and involves deacylation of mischarged Val-tRNA(Ile). This chain is Isoleucine--tRNA ligase, found in Chlamydia trachomatis serovar L2b (strain UCH-1/proctitis).